The sequence spans 666 residues: MRRPNLKWIVKASLLLLISLTLFVLITSWISSTPYTNKPVHHGVEPVPEKAGLSGDVKVKVPAIKQPEPQKPQEPDFEEDPELQKIDEPEPVEEEVDNPHPADDEPQQQPQEELQMAAPADASVKKDWHDYTFMEKDAKRVGLGEGGKASTLDDESQRDLEKRMSLENGFNALLSDSISVNRSVPDIRHPLCRKKEYVAKLPTVSVIIIFYNEYLSVLMRSVHSLINRSPPELMKEIILVDDHSDREYLGKELETYIAEHFKWVRVVRLPRRTGLIGARAAGARNATAEVLIFLDSHVEANYNWLPPLLEPIALNKRTAVCPFIDVIDHTNFHYRAQDEGARGAFDWEFFYKRLPLLPEDLKHPADPFKSPIMAGGLFAISREFFWELGGYDEGLDIWGGEQYELSFKIWMCGGEMYDAPCSRIGHIYRGPRNHQPSPRKGDYLHKNYKRVAEVWMDEYKNYLYSHGDGLYESVDPGDLTEQKAIRTKLNCKSFKWFMEEVAFDLMKTYPPVDPPSYAMGALQNVGNQNLCLDTLGRKKHNKMGMYACADNIKTPQRTQFWELSWKRDLRLRRKKECLDVQIWDANAPVWLWDCHSQGGNQYWYYDYRHKQLKHGTEGRRCLELLPFSQEVVANKCDTDNRFQQWNFGSFNKTALDNYSQDLVLSL.

Topologically, residues 1–11 are cytoplasmic; it reads MRRPNLKWIVK. The helical; Signal-anchor for type II membrane protein transmembrane segment at 12-31 threads the bilayer; sequence ASLLLLISLTLFVLITSWIS. Over 32–666 the chain is Lumenal; it reads STPYTNKPVH…NYSQDLVLSL (635 aa). Positions 90 to 126 are disordered; sequence EPVEEEVDNPHPADDEPQQQPQEELQMAAPADASVKK. A compositionally biased stretch (low complexity) spans 107 to 120; it reads QQQPQEELQMAAPA. Residue N181 is glycosylated (N-linked (GlcNAc...) asparagine). Disulfide bonds link C192/C421, C412/C491, C531/C548, C577/C594, and C621/C636. Positions 201–311 are catalytic subdomain A; that stretch reads LPTVSVIIIF…YNWLPPLLEP (111 aa). Substrate-binding residues include D242 and R272. Residue N285 is glycosylated (N-linked (GlcNAc...) asparagine). D295 is a binding site for Mn(2+). S296 is a binding site for substrate. Residue H297 participates in Mn(2+) binding. The catalytic subdomain B stretch occupies residues 367–429; that stretch reads PFKSPIMAGG…PCSRIGHIYR (63 aa). W398 contributes to the substrate binding site. H426 provides a ligand contact to Mn(2+). R429 contributes to the substrate binding site. In terms of domain architecture, Ricin B-type lectin spans 518–648; it reads AMGALQNVGN…DNRFQQWNFG (131 aa). N-linked (GlcNAc...) asparagine glycans are attached at residues N651 and N657.

Belongs to the glycosyltransferase 2 family. GalNAc-T subfamily. Mn(2+) serves as cofactor. In terms of tissue distribution, expressed during oogenesis, in the somatically derived follicle cells that surround the developing oocyte, which are involved in the maturation of the oocyte and construction of the egg shell, as well as playing a role in subsequent embryonic pattern formation. Expressed in the salivary glands from embryonic stage 12 onwards, becoming stronger at stage 13. During embryonic stages 12-13, also expressed in the posterior midgut and hindgut. During embryonic stages 14-15, expression continues in the hindgut. Expression is detected in the epidermis and antennomaxillary complex during embryonic stages 16-17. In third instar larvae, ubiquitously expressed in wing, eye-antennal, leg and haltere imaginal disks.

The protein resides in the golgi apparatus membrane. The enzyme catalyses L-seryl-[protein] + UDP-N-acetyl-alpha-D-galactosamine = a 3-O-[N-acetyl-alpha-D-galactosaminyl]-L-seryl-[protein] + UDP + H(+). The catalysed reaction is L-threonyl-[protein] + UDP-N-acetyl-alpha-D-galactosamine = a 3-O-[N-acetyl-alpha-D-galactosaminyl]-L-threonyl-[protein] + UDP + H(+). It participates in protein modification; protein glycosylation. Functionally, glycopeptide transferase involved in O-linked oligosaccharide biosynthesis, which catalyzes the transfer of an N-acetyl-D-galactosamine residue to an already glycosylated peptide. In contrast to other proteins of the family, it does not act as a peptide transferase that transfers GalNAc onto serine or threonine residue on the protein receptor, but instead requires the prior addition of a GalNAc on a peptide before adding additional GalNAc moieties. Some peptide transferase activity is however not excluded, considering that its appropriate peptide substrate may remain unidentified. Prefers the diglycosylated Muc5AC-3/13 as substrate. Might have a role in protein O-glycosylation in the Golgi and thereby in establishing and/or maintaining a proper secretory apparatus structure. The chain is N-acetylgalactosaminyltransferase 6 from Drosophila melanogaster (Fruit fly).